We begin with the raw amino-acid sequence, 2266 residues long: RNA1 polyprotein (2266 aa).

Residues 566–1158 (LCTALAAGIF…AGRDYLVQNG (593 aa)) are Cytoplasmic-facing. One can recognise an SF3 helicase domain in the interval 751–917 (MKDLVELHKR…PGVIYDPENP (167 aa)). An ATP-binding site is contributed by 781 to 788 (GQRHCGKS). Residues 1159–1179 (CGILMIAAALILILVSGWGFW) form a helical membrane-spanning segment. The Lumenal segment spans residues 1180–1205 (KLFVGLFSGTMSLGAAITGMSAVDIK). Positions 1229-1438 (AYARSQAGDG…WADIMPPNSL (210 aa)) constitute a Peptidase C3 domain. Residues histidine 1272, glutamate 1310, and cysteine 1402 each act as for picornain 3C-like protease activity in the active site. One can recognise a RdRp catalytic domain in the interval 1715–1843 (NEAINCDYSG…SVSPSIASWF (129 aa)).

Belongs to the nepoviruses RNA1 polyprotein family. Post-translationally, specific enzymatic cleavages by picornain 3C-like protease in vivo yield mature proteins. Picornain 3C-like protease is autocatalytically processed. VPg is uridylylated by the polymerase and is covalently linked to the 5'-end of genomic RNA. This uridylylated form acts as a nucleotide-peptide primer for the polymerase.

The protein localises to the host endoplasmic reticulum lumen. It localises to the host endoplasmic reticulum membrane. The enzyme catalyses RNA(n) + a ribonucleoside 5'-triphosphate = RNA(n+1) + diphosphate. Functionally, picornain 3C-like protease is a thiol protease that cleaves the P1 and P2 polyproteins. The sequence is that of RNA1 polyprotein from Tomato black ring virus (strain MJ) (TBRV).